We begin with the raw amino-acid sequence, 1134 residues long: Phytochrome 1 (1134 aa).

In terms of domain architecture, GAF spans 219 to 401; that stretch reads DIGLLCDTVV…VFGLQLNMEA (183 aa). Residue Cys-324 coordinates phytochromobilin. The PAS 1 domain maps to 616 to 687; that stretch reads VANEMVRLIE…RLLYLALQGD (72 aa). Residues 690–746 form the PAC domain; it reads QNVELKLKTFGGQKDKEAVILVVNACASRDVSDNVVGVCFVGQDVTGQKVVMDKFTR. The 72-residue stretch at 750 to 821 folds into the PAS 2 domain; the sequence is DYKAIVQNPN…KGQDAVTKFM (72 aa). The Histidine kinase domain occupies 901-1121; sequence YIRQEIKNPL…LVSLELPLAQ (221 aa).

This sequence belongs to the phytochrome family. In terms of assembly, homodimer. Post-translationally, contains one covalently linked phytochromobilin chromophore.

Its function is as follows. Regulatory photoreceptor which exists in two forms that are reversibly interconvertible by light: the Pr form that absorbs maximally in the red region of the spectrum and the Pfr form that absorbs maximally in the far-red region. Photoconversion of Pr to Pfr induces an array of morphogenic responses, whereas reconversion of Pfr to Pr cancels the induction of those responses. Pfr controls the expression of a number of nuclear genes including those encoding the small subunit of ribulose-bisphosphate carboxylase, chlorophyll A/B binding protein, protochlorophyllide reductase, rRNA, etc. It also controls the expression of its own gene(s) in a negative feedback fashion. In Selaginella martensii (Martens's spike moss), this protein is Phytochrome 1 (PHY1).